The sequence spans 297 residues: Large ribosomal subunit protein uL18 (297 aa).

Glycine 2 is modified (N-acetylglycine). N6-acetyllysine occurs at positions 5 and 48. The residue at position 185 (serine 185) is a Phosphoserine. Lysine 220 carries the N6-acetyllysine; alternate modification. Lysine 220 is covalently cross-linked (Glycyl lysine isopeptide (Lys-Gly) (interchain with G-Cter in SUMO1); alternate). Residue lysine 220 forms a Glycyl lysine isopeptide (Lys-Gly) (interchain with G-Cter in SUMO2); alternate linkage. Residue threonine 232 is modified to Phosphothreonine. The interval tyrosine 253–serine 297 is disordered. Over residues lysine 258–arginine 268 the composition is skewed to basic residues. A Phosphoserine modification is found at serine 272.

It belongs to the universal ribosomal protein uL18 family. As to quaternary structure, component of the large ribosomal subunit (LSU). Part of the 5S RNP complex, which is a LSU subcomplex composed of the 5S RNA, RPL5 and RPL11. Component of a hexameric 5S RNP precursor complex, composed of 5S RNA, RRS1, RPF2/BXDC1, RPL5, RPL11 and HEATR3; this complex acts as a precursor for ribosome assembly. Interacts with isoform 1 of NVL in an ATP-dependent manner. Interacts with RRP1B. Interacts with IPO5, IPO7 and KPNB1; these interactions may be involved in RPL5 nuclear import for the assembly of ribosomal subunits.

It is found in the cytoplasm. The protein localises to the nucleus. It localises to the nucleolus. Functionally, component of the ribosome, a large ribonucleoprotein complex responsible for the synthesis of proteins in the cell. The small ribosomal subunit (SSU) binds messenger RNAs (mRNAs) and translates the encoded message by selecting cognate aminoacyl-transfer RNA (tRNA) molecules. The large subunit (LSU) contains the ribosomal catalytic site termed the peptidyl transferase center (PTC), which catalyzes the formation of peptide bonds, thereby polymerizing the amino acids delivered by tRNAs into a polypeptide chain. The nascent polypeptides leave the ribosome through a tunnel in the LSU and interact with protein factors that function in enzymatic processing, targeting, and the membrane insertion of nascent chains at the exit of the ribosomal tunnel. As part of the 5S RNP/5S ribonucleoprotein particle it is an essential component of the LSU, required for its formation and the maturation of rRNAs. It also couples ribosome biogenesis to p53/TP53 activation. As part of the 5S RNP it accumulates in the nucleoplasm and inhibits MDM2, when ribosome biogenesis is perturbed, mediating the stabilization and the activation of TP53. This Homo sapiens (Human) protein is Large ribosomal subunit protein uL18 (RPL5).